The primary structure comprises 370 residues: Proto-oncogene Wnt-1 (370 aa).

The first 27 residues, 1-27 (MGLWALLPSWVSTTLLLALTALPAALA), serve as a signal peptide directing secretion. Asn29 is a glycosylation site (N-linked (GlcNAc...) asparagine). Disulfide bonds link Cys93-Cys104, Cys143-Cys151, Cys153-Cys170, Cys218-Cys232, Cys220-Cys227, Cys299-Cys330, Cys315-Cys325, Cys329-Cys369, Cys345-Cys360, Cys347-Cys357, and Cys352-Cys353. Ser224 carries O-palmitoleoyl serine; by PORCN lipidation. Asn316 and Asn346 each carry an N-linked (GlcNAc...) asparagine glycan. Asn359 is a glycosylation site (N-linked (GlcNAc...) asparagine).

The protein belongs to the Wnt family. Forms a soluble 1:1 complex with AFM; this prevents oligomerization and is required for prolonged biological activity. The complex with AFM may represent the physiological form in body fluids. Interacts with PORCN. Interacts with RSPO1, RSPO2 and RSPO3. Interacts with WLS. Post-translationally, palmitoleoylation is required for efficient binding to frizzled receptors. Palmitoleoylation is necessary for proper trafficking to cell surface. Depalmitoleoylated by NOTUM, leading to inhibit Wnt signaling pathway. In terms of tissue distribution, testis and mid-gestational embryos. In the testis, detected only in postmeiotic germ cells undergoing differentiation from round spermatids into mature spermatozoa. In the embryos, expression is restricted to the developing CNS in regions of the neural tube other than the telencephalon. Expressed in osteoblast; expression levels increase with advancing osteoblast differentiation. Expressed in the brain, femur, spleen, and hematopoietic bone marrow.

The protein resides in the secreted. It is found in the extracellular space. The protein localises to the extracellular matrix. Functionally, ligand for members of the frizzled family of seven transmembrane receptors. Acts in the canonical Wnt signaling pathway by promoting beta-catenin-dependent transcriptional activation. In some developmental processes, is also a ligand for the coreceptor RYK, thus triggering Wnt signaling. Plays an essential role in the development of the embryonic brain and central nervous system (CNS). Has a role in osteoblast function, bone development and bone homeostasis. This is Proto-oncogene Wnt-1 (Wnt1) from Mus musculus (Mouse).